Here is a 570-residue protein sequence, read N- to C-terminus: Hydroxylamine reductase (570 aa).

Residues Cys5, Cys8, Cys17, and Cys23 each coordinate [4Fe-4S] cluster. Residues His266, Glu290, Cys334, Cys425, Cys453, Cys478, Glu513, and Lys515 each coordinate hybrid [4Fe-2O-2S] cluster. Cys425 carries the post-translational modification Cysteine persulfide.

It belongs to the HCP family. [4Fe-4S] cluster is required as a cofactor. Hybrid [4Fe-2O-2S] cluster serves as cofactor.

It is found in the cytoplasm. It carries out the reaction A + NH4(+) + H2O = hydroxylamine + AH2 + H(+). Functionally, catalyzes the reduction of hydroxylamine to form NH(3) and H(2)O. This chain is Hydroxylamine reductase, found in Clostridium tetani (strain Massachusetts / E88).